We begin with the raw amino-acid sequence, 309 residues long: Serine/threonine-protein phosphatase 4 catalytic subunit (309 aa).

The Mn(2+) site is built by Asp52, His54, Asp80, and Asn112. The Proton donor role is filled by His113. His162 and His236 together coordinate Mn(2+). The residue at position 309 (Leu309) is a Leucine methyl ester.

Belongs to the PPP phosphatase family. PP-4 (PP-X) subfamily. In terms of assembly, catalytic subunit of the histone H2A phosphatase complex (HTP-C) containing PPH3, PSY2 and PSY4. Mn(2+) serves as cofactor.

The protein localises to the cytoplasm. The protein resides in the nucleus. It carries out the reaction O-phospho-L-seryl-[protein] + H2O = L-seryl-[protein] + phosphate. The enzyme catalyses O-phospho-L-threonyl-[protein] + H2O = L-threonyl-[protein] + phosphate. Forms the histone H2A phosphatase complex in association with the regulatory subunits PSY2 and PSY4, which dephosphorylates H2AS128ph (gamma-H2A) that has been displaced from sites of DNA lesions in the double-stranded DNA break repair process. Dephosphorylation is necessary for efficient recovery from the DNA damage checkpoint. This chain is Serine/threonine-protein phosphatase 4 catalytic subunit (PPH3), found in Candida glabrata (strain ATCC 2001 / BCRC 20586 / JCM 3761 / NBRC 0622 / NRRL Y-65 / CBS 138) (Yeast).